The chain runs to 104 residues: Large ribosomal subunit protein uL24 (104 aa).

Belongs to the universal ribosomal protein uL24 family. Part of the 50S ribosomal subunit.

Functionally, one of two assembly initiator proteins, it binds directly to the 5'-end of the 23S rRNA, where it nucleates assembly of the 50S subunit. Its function is as follows. One of the proteins that surrounds the polypeptide exit tunnel on the outside of the subunit. This is Large ribosomal subunit protein uL24 from Neorickettsia sennetsu (strain ATCC VR-367 / Miyayama) (Ehrlichia sennetsu).